A 227-amino-acid polypeptide reads, in one-letter code: Pro-thyrotropin-releasing hormone-A (227 aa).

An N-terminal signal peptide occupies residues 1 to 15; sequence MVSVWWLLLLGTTVS. Residue Gln75 is modified to Pyrrolidone carboxylic acid. Pro77 bears the Proline amide mark. The residue at position 89 (Gln89) is a Pyrrolidone carboxylic acid. Pro91 bears the Proline amide mark. Gln107 bears the Pyrrolidone carboxylic acid mark. Disordered stretches follow at residues 107 to 128 and 151 to 204; these read QHPGRRFVDDVEKRQHPGKREE and RRQH…PCEG. Pro109 is modified (proline amide). A compositionally biased stretch (basic and acidic residues) spans 112-128; the sequence is RFVDDVEKRQHPGKREE. Gln121 bears the Pyrrolidone carboxylic acid mark. Pro123 is subject to Proline amide. Position 153 is a pyrrolidone carboxylic acid (Gln153). Residue Pro155 is modified to Proline amide. Gln168 is modified (pyrrolidone carboxylic acid). Pro170 carries the proline amide modification. Positions 184 to 201 are enriched in basic and acidic residues; it reads ENSKEVGKRQHPGKRYDP. Pyrrolidone carboxylic acid is present on Gln193. A Proline amide modification is found at Pro195.

It belongs to the TRH family.

It is found in the secreted. This chain is Pro-thyrotropin-releasing hormone-A (trh-a), found in Xenopus laevis (African clawed frog).